We begin with the raw amino-acid sequence, 527 residues long: MASDFLPVRRALLSVSDKTGLIDLARALVARNVELLSTGGTAKAIREAGLPVKDVAELTGFPEMMDGRVKTLHPLVHGGLLGRAGVDEAVMAEHGIVPIDLLVLNLYPFESVTVKADCTLADAVENIDIGGPAMLRSAAKNFARVAVAADPAQYADLLVELEANDGQLSAAKRFALSVAAFNRVAQYDAAISNYLSAVADSAEAVPTRSPFPAQINSNFVKVMDLRYGENPHQSGAFYRDLYPVPGTLATFQQLQGKELSYNNLADADAAWECVRQFDAPACVIVKHANPCGVAVGAGCGDAYELAYATDPTSAFGGILAFNKTLDAATAKAILDRQFVEVLIAPDYEAGALEYATKKANVRVLKIPHGNGLNNYDTKRIGSGLLMQSADNRGMSQGELSVVTQRAPNEAELGDLLFAWRVAKYVKSNAIVYAKDNRTIGVGAGQMSRVVSAKIAALKAEEAKLTVAGSVMASDAFFPFRDGIDAAAAAGIKAVIQPGGSMRDGEVIAAADEHGIAMVFTGVRHFRH.

Residues 1 to 149 (MASDFLPVRR…KNFARVAVAA (149 aa)) enclose the MGS-like domain.

This sequence belongs to the PurH family.

The enzyme catalyses (6R)-10-formyltetrahydrofolate + 5-amino-1-(5-phospho-beta-D-ribosyl)imidazole-4-carboxamide = 5-formamido-1-(5-phospho-D-ribosyl)imidazole-4-carboxamide + (6S)-5,6,7,8-tetrahydrofolate. The catalysed reaction is IMP + H2O = 5-formamido-1-(5-phospho-D-ribosyl)imidazole-4-carboxamide. The protein operates within purine metabolism; IMP biosynthesis via de novo pathway; 5-formamido-1-(5-phospho-D-ribosyl)imidazole-4-carboxamide from 5-amino-1-(5-phospho-D-ribosyl)imidazole-4-carboxamide (10-formyl THF route): step 1/1. It participates in purine metabolism; IMP biosynthesis via de novo pathway; IMP from 5-formamido-1-(5-phospho-D-ribosyl)imidazole-4-carboxamide: step 1/1. The chain is Bifunctional purine biosynthesis protein PurH from Xanthomonas axonopodis pv. citri (strain 306).